The chain runs to 330 residues: Ketol-acid reductoisomerase (NADP(+)) (330 aa).

The 182-residue stretch at 3-184 (LPVYYDKDID…GGGRMGVLKT (182 aa)) folds into the KARI N-terminal Rossmann domain. NADP(+)-binding positions include 26 to 29 (YGAQ), S52, and S54. H109 is a catalytic residue. G135 contributes to the NADP(+) binding site. The 145-residue stretch at 185-329 (SFKEECESDL…EILRAPFNHK (145 aa)) folds into the KARI C-terminal knotted domain. The Mg(2+) site is built by D193, E197, E229, and E233. S254 lines the substrate pocket.

The protein belongs to the ketol-acid reductoisomerase family. It depends on Mg(2+) as a cofactor.

The enzyme catalyses (2R)-2,3-dihydroxy-3-methylbutanoate + NADP(+) = (2S)-2-acetolactate + NADPH + H(+). It catalyses the reaction (2R,3R)-2,3-dihydroxy-3-methylpentanoate + NADP(+) = (S)-2-ethyl-2-hydroxy-3-oxobutanoate + NADPH + H(+). Its pathway is amino-acid biosynthesis; L-isoleucine biosynthesis; L-isoleucine from 2-oxobutanoate: step 2/4. It participates in amino-acid biosynthesis; L-valine biosynthesis; L-valine from pyruvate: step 2/4. Its function is as follows. Involved in the biosynthesis of branched-chain amino acids (BCAA). Catalyzes an alkyl-migration followed by a ketol-acid reduction of (S)-2-acetolactate (S2AL) to yield (R)-2,3-dihydroxy-isovalerate. In the isomerase reaction, S2AL is rearranged via a Mg-dependent methyl migration to produce 3-hydroxy-3-methyl-2-ketobutyrate (HMKB). In the reductase reaction, this 2-ketoacid undergoes a metal-dependent reduction by NADPH to yield (R)-2,3-dihydroxy-isovalerate. The chain is Ketol-acid reductoisomerase (NADP(+)) from Helicobacter pylori (strain HPAG1).